We begin with the raw amino-acid sequence, 291 residues long: MSCQPFTSTDTFIPLNSESSATLPLIMHPSAAECLPVSNHATNVMSTATGLHYSVPSCHYGNQSSTYGVMAGSLTPCLYEFPDHTLSHGFPPMHQPLLSEDPTAADFKQELRRKSKLIEEPIDMDSPEIRELEKFANEFKVRRIKLGYTQTNVGEALAAVHGSEFSQTTICRFENLQLSFKNACKLKAILFKWLEEAEQVGALYNEKVGANERKRKRRTTISIAAKDALERHFGEQNKPSSQEILRMAEELNLEKEVVRVWFCNRRQREKRVKTSLNQSLFPNSKEHLECR.

A 9aaTAD motif is present at residues 5 to 13 (PFTSTDTFI). The POU-specific domain occupies 124 to 198 (MDSPEIRELE…ILFKWLEEAE (75 aa)). A DNA-binding region (homeobox) is located at residues 214-273 (KRKRRTTISIAAKDALERHFGEQNKPSSQEILRMAEELNLEKEVVRVWFCNRRQREKRVK).

It belongs to the POU transcription factor family. Class-1 subfamily. Interacts with PITX1. Interacts with LHX3. Interacts with ELK1.

It is found in the nucleus. Transcription factor involved in the specification of the lactotrope, somatotrope, and thyrotrope phenotypes in the developing anterior pituitary. Activates growth hormone and prolactin genes. Specifically binds to the consensus sequence 5'-TAAAT-3'. This chain is Pituitary-specific positive transcription factor 1 (POU1F1), found in Ovis aries (Sheep).